We begin with the raw amino-acid sequence, 68 residues long: Small integral membrane protein 45 (68 aa).

The helical transmembrane segment at 7–27 (WFVPVYLVISVLILVGFGACI) threads the bilayer.

Highly expressed in brain.

Its subcellular location is the nucleus. The protein resides in the cytoplasm. The protein localises to the membrane. Its function is as follows. Plays a role in the regulation of neuron maturation. This is Small integral membrane protein 45 from Homo sapiens (Human).